Consider the following 249-residue polypeptide: DNA repair protein RecO (249 aa).

It belongs to the RecO family.

Its function is as follows. Involved in DNA repair and RecF pathway recombination. The sequence is that of DNA repair protein RecO from Leptospira biflexa serovar Patoc (strain Patoc 1 / Ames).